A 489-amino-acid chain; its full sequence is Phosphoenolpyruvate carboxykinase (ATP) (489 aa).

Substrate contacts are provided by Arg53 and Tyr159. Residues His185, Gly208 to Thr216, Asp258, Arg300, Lys409 to Ile410, and Ser415 contribute to the ATP site. Arg300 lines the substrate pocket.

This sequence belongs to the phosphoenolpyruvate carboxykinase (ATP) family.

It is found in the cytoplasm. The catalysed reaction is oxaloacetate + ATP = phosphoenolpyruvate + ADP + CO2. Its pathway is carbohydrate biosynthesis; gluconeogenesis. Involved in the gluconeogenesis. Catalyzes the conversion of oxaloacetate (OAA) to phosphoenolpyruvate (PEP) through direct phosphoryl transfer between the nucleoside triphosphate and OAA. This Aeropyrum pernix (strain ATCC 700893 / DSM 11879 / JCM 9820 / NBRC 100138 / K1) protein is Phosphoenolpyruvate carboxykinase (ATP).